Here is a 372-residue protein sequence, read N- to C-terminus: MSSNAPRHTALDALHRSLGATMTDFAGWDMPLRYGSERDEHLAVRSKAGLFDLSHMGEITVTGPGAAALLNYALVGNIASVGVGRARYTMICRADGGILDDLIVYRLQEQTYLVVANASNAQVVLDALTERAGGFDAVVRDDRDAYALIAVQGPESPGILKSLTDADLDGLKYYAGLPGTVAGVPALIARTGYTGEDGFELFVDPADAEKLWQALTEAGAPAGLVPCGLSCRDTLRLEAGMPLYGHELSTSLTPFDAGLGRVVKFEKEGDFVGREALTEAAALAEKNPPRVLVGLIAEGRRVPRAGYPVVVGGEVIGEVTSGAPSPTLGRPIAMAYVDAAHAAPGTAGVGVDIRGSHEPYEVVALPFYRRQK.

It belongs to the GcvT family. As to quaternary structure, the glycine cleavage system is composed of four proteins: P, T, L and H.

It catalyses the reaction N(6)-[(R)-S(8)-aminomethyldihydrolipoyl]-L-lysyl-[protein] + (6S)-5,6,7,8-tetrahydrofolate = N(6)-[(R)-dihydrolipoyl]-L-lysyl-[protein] + (6R)-5,10-methylene-5,6,7,8-tetrahydrofolate + NH4(+). Its function is as follows. The glycine cleavage system catalyzes the degradation of glycine. This is Aminomethyltransferase from Streptomyces avermitilis (strain ATCC 31267 / DSM 46492 / JCM 5070 / NBRC 14893 / NCIMB 12804 / NRRL 8165 / MA-4680).